The chain runs to 104 residues: Small integral membrane protein 19 (104 aa).

A helical membrane pass occupies residues 20-42; sequence AWNEATNVYLLVILVSFALLMYA.

Belongs to the SMIM19 family.

Its subcellular location is the membrane. The protein is Small integral membrane protein 19 (smim19) of Danio rerio (Zebrafish).